The sequence spans 312 residues: tRNA-cytidine(32) 2-sulfurtransferase (312 aa).

The PP-loop motif motif lies at 47–52 (SGGKDS). The [4Fe-4S] cluster site is built by Cys122, Cys125, and Cys213.

It belongs to the TtcA family. In terms of assembly, homodimer. It depends on Mg(2+) as a cofactor. Requires [4Fe-4S] cluster as cofactor.

The protein resides in the cytoplasm. The catalysed reaction is cytidine(32) in tRNA + S-sulfanyl-L-cysteinyl-[cysteine desulfurase] + AH2 + ATP = 2-thiocytidine(32) in tRNA + L-cysteinyl-[cysteine desulfurase] + A + AMP + diphosphate + H(+). It participates in tRNA modification. Catalyzes the ATP-dependent 2-thiolation of cytidine in position 32 of tRNA, to form 2-thiocytidine (s(2)C32). The sulfur atoms are provided by the cysteine/cysteine desulfurase (IscS) system. The protein is tRNA-cytidine(32) 2-sulfurtransferase of Actinobacillus succinogenes (strain ATCC 55618 / DSM 22257 / CCUG 43843 / 130Z).